Reading from the N-terminus, the 435-residue chain is GTPase Der (435 aa).

2 EngA-type G domains span residues 4-167 (PVVA…PAEK) and 175-350 (ISFS…DNQN). Residues 10–17 (GQPNVGKS), 57–61 (DTGGI), 119–122 (NKAD), 181–188 (GRPNVGKS), 228–232 (DTAGI), and 293–296 (NKWD) contribute to the GTP site. The 85-residue stretch at 351-435 (QRIQSSVLND…PIKILPRKRK (85 aa)) folds into the KH-like domain.

It belongs to the TRAFAC class TrmE-Era-EngA-EngB-Septin-like GTPase superfamily. EngA (Der) GTPase family. As to quaternary structure, associates with the 50S ribosomal subunit.

Functionally, GTPase that plays an essential role in the late steps of ribosome biogenesis. The protein is GTPase Der of Lactobacillus helveticus (strain DPC 4571).